A 601-amino-acid chain; its full sequence is METINTTERLAALRDLMKKNKVDIYIVPSEDSHSSEYIAACDARREFISGFSGSAGCAVVTLDKAALATDDNWLLLKQGLQDVPTWQEWAAEQSESGKVVGVDSTIISAPDARKLLEKVKKRGGSDLVAVEENLVDLVWGDNRPSRPKEPVKVLARGFSGKDVKTKLEDLRKELQKKKSSGFIVSMLDEIAWLFNLRGSDIPYNPVFFSYASVTPSSATLYVDSSKLSEECITHLNDNGVSIREYSKIFSDVEVLSQSLDSEDAKLKKFLVSSRASWALKRALGGDAKVDEVRSPIGDAKSIKNETELEGMRACHIRDGAALIEYFAWLEHQLVVEKVEMDEVIAADKLEQLRSKQKHFVGLSFDTISSTGANAAVIHYKPEPGNCSIIDPKAVYLCDSGAQYFDGTTDTTRTLHFGEPTEMEKKAYTLVLKGNIALDVAVFPKGTSGFALDALARQFLWEEGLDYRHGTGHGVGSYLNVHEGPIGIGTRIQYSEVPLAPGNVISNEPGYYEDGSFGIRIENIIMVKEVETKHQFGDKPYLGFEHVTMVPYCRKLIDETLLTRREKHWLNEYHADIYSKTKDFFKGDELTMSWLEREIEPL.

Residues D398, D409, E507, and E521 each coordinate Mn(2+).

It belongs to the peptidase M24B family. Mn(2+) serves as cofactor.

It catalyses the reaction Release of any N-terminal amino acid, including proline, that is linked to proline, even from a dipeptide or tripeptide.. Functionally, catalyzes the removal of a penultimate prolyl residue from the N-termini of peptides. The chain is Probable Xaa-Pro aminopeptidase P (ampp) from Sclerotinia sclerotiorum (strain ATCC 18683 / 1980 / Ss-1) (White mold).